We begin with the raw amino-acid sequence, 236 residues long: uncharacterized protein (236 aa).

Positions 4 to 236 constitute a GP-PDE domain; that stretch reads QFLIAYRGYS…VKFQITAQIY (233 aa).

This sequence to glycerophosphoryl diester phosphodiesterases (EC 3.1.4.46). To M.genitalium MG293.

This is an uncharacterized protein from Mycoplasma genitalium (strain ATCC 33530 / DSM 19775 / NCTC 10195 / G37) (Mycoplasmoides genitalium).